Here is a 185-residue protein sequence, read N- to C-terminus: Threonylcarbamoyl-AMP synthase (185 aa).

The region spanning 1–185 (MKNFEQVLKA…AKTSQILRQG (185 aa)) is the YrdC-like domain. A disordered region spans residues 163-185 (ETSGRNKPSEIRDAKTSQILRQG). Positions 164–177 (TSGRNKPSEIRDAK) are enriched in basic and acidic residues.

Belongs to the SUA5 family. TsaC subfamily.

It localises to the cytoplasm. The catalysed reaction is L-threonine + hydrogencarbonate + ATP = L-threonylcarbamoyladenylate + diphosphate + H2O. In terms of biological role, required for the formation of a threonylcarbamoyl group on adenosine at position 37 (t(6)A37) in tRNAs that read codons beginning with adenine. Catalyzes the conversion of L-threonine, HCO(3)(-)/CO(2) and ATP to give threonylcarbamoyl-AMP (TC-AMP) as the acyladenylate intermediate, with the release of diphosphate. The protein is Threonylcarbamoyl-AMP synthase of Vibrio campbellii (strain ATCC BAA-1116).